Here is a 604-residue protein sequence, read N- to C-terminus: Terpenoid synthase 30 (604 aa).

Residues Asn-356, Asp-360, Asn-500, Thr-504, and Glu-508 each coordinate Mg(2+). The DDXXD motif; degenerate signature appears at 356–360 (NDVCD).

Belongs to the terpene synthase family. Tpsa subfamily. Requires Mg(2+) as cofactor. Mn(2+) serves as cofactor.

The protein localises to the cytoplasm. It functions in the pathway secondary metabolite biosynthesis; terpenoid biosynthesis. Functionally, involved in terpene biosynthesis in roots. Possesses sesquiterpene (C15) synthase activity and diterpene (C20) synthase activity in vitro. This Arabidopsis thaliana (Mouse-ear cress) protein is Terpenoid synthase 30.